The chain runs to 271 residues: Type III pantothenate kinase (271 aa).

6–13 (DVRNTHTV) contacts ATP. A substrate-binding site is contributed by 109–112 (GADR). The active-site Proton acceptor is aspartate 111. Residue aspartate 131 participates in K(+) binding. ATP is bound at residue serine 134. Threonine 186 provides a ligand contact to substrate.

The protein belongs to the type III pantothenate kinase family. In terms of assembly, homodimer. It depends on NH4(+) as a cofactor. Requires K(+) as cofactor.

It localises to the cytoplasm. The enzyme catalyses (R)-pantothenate + ATP = (R)-4'-phosphopantothenate + ADP + H(+). It participates in cofactor biosynthesis; coenzyme A biosynthesis; CoA from (R)-pantothenate: step 1/5. In terms of biological role, catalyzes the phosphorylation of pantothenate (Pan), the first step in CoA biosynthesis. In Mycobacteroides abscessus (strain ATCC 19977 / DSM 44196 / CCUG 20993 / CIP 104536 / JCM 13569 / NCTC 13031 / TMC 1543 / L948) (Mycobacterium abscessus), this protein is Type III pantothenate kinase.